Reading from the N-terminus, the 127-residue chain is Glycine cleavage system H protein 1 (127 aa).

Residues 20-101 (SVTVGITAYA…MGEGWFFRFI (82 aa)) form the Lipoyl-binding domain. At Lys-60 the chain carries N6-lipoyllysine.

It belongs to the GcvH family. The glycine cleavage system is composed of four proteins: P, T, L and H. Requires (R)-lipoate as cofactor.

Its function is as follows. The glycine cleavage system catalyzes the degradation of glycine. The H protein shuttles the methylamine group of glycine from the P protein to the T protein. This is Glycine cleavage system H protein 1 from Pseudomonas putida (strain ATCC 47054 / DSM 6125 / CFBP 8728 / NCIMB 11950 / KT2440).